Consider the following 88-residue polypeptide: UPF0297 protein LAR_0520 (88 aa).

It belongs to the UPF0297 family.

In Limosilactobacillus reuteri subsp. reuteri (strain JCM 1112) (Lactobacillus reuteri), this protein is UPF0297 protein LAR_0520.